The primary structure comprises 793 residues: Endonuclease MutS2 (793 aa).

335–342 provides a ligand contact to ATP; sequence GPNTGGKT. Residues 718-793 enclose the Smr domain; sequence IDVRGYNLEE…ESGVTIVELR (76 aa).

It belongs to the DNA mismatch repair MutS family. MutS2 subfamily. In terms of assembly, homodimer. Binds to stalled ribosomes, contacting rRNA.

Endonuclease that is involved in the suppression of homologous recombination and thus may have a key role in the control of bacterial genetic diversity. Functionally, acts as a ribosome collision sensor, splitting the ribosome into its 2 subunits. Detects stalled/collided 70S ribosomes which it binds and splits by an ATP-hydrolysis driven conformational change. Acts upstream of the ribosome quality control system (RQC), a ribosome-associated complex that mediates the extraction of incompletely synthesized nascent chains from stalled ribosomes and their subsequent degradation. Probably generates substrates for RQC. The sequence is that of Endonuclease MutS2 from Acetivibrio thermocellus (strain ATCC 27405 / DSM 1237 / JCM 9322 / NBRC 103400 / NCIMB 10682 / NRRL B-4536 / VPI 7372) (Clostridium thermocellum).